Consider the following 572-residue polypeptide: Isocitrate lyase (572 aa).

104–106 (SGW) serves as a coordination point for substrate. Asp175 contacts Mg(2+). Cys213 acts as the Proton acceptor in catalysis. Substrate-binding positions include 214–215 (GH), Arg250, 437–441 (NLSPS), and Thr472. A disordered region spans residues 550-572 (QFKGSWTGPGSESSSHVLAKSRM). Positions 570 to 572 (SRM) match the Microbody targeting signal motif.

It belongs to the isocitrate lyase/PEP mutase superfamily. Isocitrate lyase family. Mg(2+) serves as cofactor. As to expression, expressed in leaves.

The protein resides in the glyoxysome. The enzyme catalyses D-threo-isocitrate = glyoxylate + succinate. Its pathway is carbohydrate metabolism; glyoxylate cycle; (S)-malate from isocitrate: step 1/2. In terms of biological role, involved in storage lipid mobilization during the growth of higher plant seedling. The polypeptide is Isocitrate lyase (Oryza sativa subsp. japonica (Rice)).